A 410-amino-acid polypeptide reads, in one-letter code: Hemocyanin, beta-C chain unit D (410 aa).

H44 and H55 together coordinate Cu cation. The cysteines at positions 50 and 59 are disulfide-linked. The 2'-(S-cysteinyl)-histidine (Cys-His) cross-link spans 60–62 (CVH). Positions 71, 175, 179, and 206 each coordinate Cu cation. C165 and C232 are oxidised to a cystine. A glycan (N-linked (GlcNAc...) asparagine) is linked at N253. C321 and C332 are oxidised to a cystine.

The protein belongs to the tyrosinase family. Hemocyanin subfamily. In terms of assembly, decamers of large identical subunits (450 kDa), each containing 8 globular oxygen-binding functional units. Cu(2+) serves as cofactor.

Functionally, hemocyanins are copper-containing oxygen carriers occurring freely dissolved in the hemolymph of many mollusks and arthropods. The chain is Hemocyanin, beta-C chain unit D from Helix pomatia (Roman snail).